We begin with the raw amino-acid sequence, 274 residues long: tRNA uridine(34) hydroxylase (274 aa).

In terms of domain architecture, Rhodanese spans 121-217 (SRSDVYTIDT…YFKSTKNTNN (97 aa)). Residue Cys-177 is the Cysteine persulfide intermediate of the active site.

The protein belongs to the TrhO family.

It catalyses the reaction uridine(34) in tRNA + AH2 + O2 = 5-hydroxyuridine(34) in tRNA + A + H2O. Its function is as follows. Catalyzes oxygen-dependent 5-hydroxyuridine (ho5U) modification at position 34 in tRNAs. The polypeptide is tRNA uridine(34) hydroxylase (Ehrlichia canis (strain Jake)).